We begin with the raw amino-acid sequence, 128 residues long: Sirohydrochlorin cobaltochelatase (128 aa).

His-9 serves as the catalytic Proton acceptor. His-9 provides a ligand contact to Co(2+). Residues Lys-43 and 68–73 contribute to the substrate site; that span reads FATGTH. His-73 contacts Co(2+).

Belongs to the CbiX family. CbiXS subfamily. As to quaternary structure, homotetramer; dimer of dimers.

The catalysed reaction is Co-sirohydrochlorin + 2 H(+) = sirohydrochlorin + Co(2+). It participates in cofactor biosynthesis; adenosylcobalamin biosynthesis; cob(II)yrinate a,c-diamide from sirohydrochlorin (anaerobic route): step 1/10. In terms of biological role, catalyzes the insertion of Co(2+) into sirohydrochlorin as part of the anaerobic pathway to cobalamin biosynthesis. This is Sirohydrochlorin cobaltochelatase from Saccharolobus islandicus (strain Y.N.15.51 / Yellowstone #2) (Sulfolobus islandicus).